A 295-amino-acid chain; its full sequence is 4-diphosphocytidyl-2-C-methyl-D-erythritol kinase (295 aa).

Lys-22 is an active-site residue. ATP is bound at residue 106-116; that stretch reads PAGGGFGGGSS. The active site involves Asp-148.

It belongs to the GHMP kinase family. IspE subfamily.

The catalysed reaction is 4-CDP-2-C-methyl-D-erythritol + ATP = 4-CDP-2-C-methyl-D-erythritol 2-phosphate + ADP + H(+). The protein operates within isoprenoid biosynthesis; isopentenyl diphosphate biosynthesis via DXP pathway; isopentenyl diphosphate from 1-deoxy-D-xylulose 5-phosphate: step 3/6. Its function is as follows. Catalyzes the phosphorylation of the position 2 hydroxy group of 4-diphosphocytidyl-2C-methyl-D-erythritol. In Xanthomonas axonopodis pv. citri (strain 306), this protein is 4-diphosphocytidyl-2-C-methyl-D-erythritol kinase.